The chain runs to 538 residues: Bifunctional purine biosynthesis protein PurH (538 aa).

The MGS-like domain maps to 6–158 (KHIPAPDLHR…KNHAYVATVV (153 aa)).

It belongs to the PurH family.

It carries out the reaction (6R)-10-formyltetrahydrofolate + 5-amino-1-(5-phospho-beta-D-ribosyl)imidazole-4-carboxamide = 5-formamido-1-(5-phospho-D-ribosyl)imidazole-4-carboxamide + (6S)-5,6,7,8-tetrahydrofolate. The enzyme catalyses IMP + H2O = 5-formamido-1-(5-phospho-D-ribosyl)imidazole-4-carboxamide. Its pathway is purine metabolism; IMP biosynthesis via de novo pathway; 5-formamido-1-(5-phospho-D-ribosyl)imidazole-4-carboxamide from 5-amino-1-(5-phospho-D-ribosyl)imidazole-4-carboxamide (10-formyl THF route): step 1/1. The protein operates within purine metabolism; IMP biosynthesis via de novo pathway; IMP from 5-formamido-1-(5-phospho-D-ribosyl)imidazole-4-carboxamide: step 1/1. The sequence is that of Bifunctional purine biosynthesis protein PurH from Brucella ovis (strain ATCC 25840 / 63/290 / NCTC 10512).